Consider the following 208-residue polypeptide: N-(5'-phosphoribosyl)anthranilate isomerase (208 aa).

This sequence belongs to the TrpF family.

The catalysed reaction is N-(5-phospho-beta-D-ribosyl)anthranilate = 1-(2-carboxyphenylamino)-1-deoxy-D-ribulose 5-phosphate. It functions in the pathway amino-acid biosynthesis; L-tryptophan biosynthesis; L-tryptophan from chorismate: step 3/5. In Chlamydia trachomatis serovar A (strain ATCC VR-571B / DSM 19440 / HAR-13), this protein is N-(5'-phosphoribosyl)anthranilate isomerase.